Here is a 179-residue protein sequence, read N- to C-terminus: UPF0227 protein Shew185_2404 (179 aa).

This sequence belongs to the UPF0227 family.

This chain is UPF0227 protein Shew185_2404, found in Shewanella baltica (strain OS185).